Reading from the N-terminus, the 190-residue chain is Threonylcarbamoyl-AMP synthase (190 aa).

In terms of domain architecture, YrdC-like spans Thr7–Gly190.

It belongs to the SUA5 family. TsaC subfamily.

The protein resides in the cytoplasm. It carries out the reaction L-threonine + hydrogencarbonate + ATP = L-threonylcarbamoyladenylate + diphosphate + H2O. Its function is as follows. Required for the formation of a threonylcarbamoyl group on adenosine at position 37 (t(6)A37) in tRNAs that read codons beginning with adenine. Catalyzes the conversion of L-threonine, HCO(3)(-)/CO(2) and ATP to give threonylcarbamoyl-AMP (TC-AMP) as the acyladenylate intermediate, with the release of diphosphate. The protein is Threonylcarbamoyl-AMP synthase of Salmonella arizonae (strain ATCC BAA-731 / CDC346-86 / RSK2980).